The primary structure comprises 224 residues: Polysialic acid transport ATP-binding protein KpsT (224 aa).

The region spanning 2–223 (IKIENLTKSY…EYKMYQDLDI (222 aa)) is the ABC transporter domain. ATP is bound at residue 38 to 45 (GRNGAGKS).

This sequence belongs to the ABC transporter superfamily.

Its subcellular location is the cell inner membrane. Its function is as follows. Putative ATP-binding protein, and an energy coupling component for the transport of polysialic acid across the cytoplasmic membrane. In Escherichia coli, this protein is Polysialic acid transport ATP-binding protein KpsT (kpsT).